A 439-amino-acid polypeptide reads, in one-letter code: MNRPKVQRRVGKYEVGKTLGQGTFAKVRCAVNTETGERVALKILDKEKVLKHKMAEQIRREICTMKLINHPNVVRLYEVLASKTKIYIVLEFGTGGELFDKIVHDGRLKEENARKYFQQLINAVDYCHSRGVYHRDLKPENLLLDAQGNLKVSDFGLSALSRQVRGDGLLHTACGTPNYAAPEVLNDQGYDGATADLWSCGVILFVLLAGYLPFEDSNLMTLYKKIIAGEYHCPPWLSPGAKNLIVRILDPNPMTRITIPEVLGDAWFKKNYKPAVFEEKEEANLDDVDAVFKDSEEHHVTEKKEEQPTSMNAFELISMSRALDLGNLFEEEEGFKRETRFAAKGAANDLVQKIEEASKPLGFDIQKKNYKMRLENVTAGRKGNLRVATEIFQVSPSLHMIEVRKTKGDTLEFHKFYKKLSTSLNDVVWKSGESSGLSK.

Residues 13–268 (YEVGKTLGQG…IPEVLGDAWF (256 aa)) form the Protein kinase domain. Residues 19–27 (LGQGTFAKV) and Lys-42 contribute to the ATP site. Residue Asp-136 is the Proton acceptor of the active site. Residues 154–183 (DFGLSALSRQVRGDGLLHTACGTPNYAAPE) form an activation loop region. Ser-158 is modified (phosphoserine). Thr-172 carries the post-translational modification Phosphothreonine. An NAF domain is found at 306 to 330 (EQPTSMNAFELISMSRALDLGNLFE). Positions 336 to 365 (KRETRFAAKGAANDLVQKIEEASKPLGFDI) are PPI.

Belongs to the protein kinase superfamily. CAMK Ser/Thr protein kinase family. SNF1 subfamily. In terms of assembly, interacts with RBOHF (via N-terminus). It depends on Mn(2+) as a cofactor.

The protein localises to the cell membrane. The enzyme catalyses L-seryl-[protein] + ATP = O-phospho-L-seryl-[protein] + ADP + H(+). It carries out the reaction L-threonyl-[protein] + ATP = O-phospho-L-threonyl-[protein] + ADP + H(+). CIPK serine-threonine protein kinases interact with CBL proteins. Binding of a CBL protein to the regulatory NAF domain of CIPK protein lead to the activation of the kinase in a calcium-dependent manner. Involved in the calcium-dependent regulation of reactive oxygen species production by the NADPH oxidase RBOHF. In Arabidopsis thaliana (Mouse-ear cress), this protein is CBL-interacting serine/threonine-protein kinase 26 (CIPK26).